Here is a 446-residue protein sequence, read N- to C-terminus: Vacuolar cation/proton exchanger 4 (446 aa).

Low complexity predominate over residues 1–16 (MSSISTESSSNLSLLE). Residues 1–33 (MSSISTESSSNLSLLENGGGGSDKPTAETSRRV) form a disordered region. Residues 1 to 69 (MSSISTESSS…MRRILTNLQE (69 aa)) lie on the Cytoplasmic side of the membrane. The helical transmembrane segment at 70-90 (VLLGTKLFILFPAVPLAVVAH) threads the bilayer. The Extracellular segment spans residues 91–96 (RYDCPR). Residues 97-117 (AWVFALSLLGLTPLAERISFL) form a helical membrane-spanning segment. At 118 to 128 (TEQIAFHTGPT) the chain is on the cytoplasmic side. The chain crosses the membrane as a helical span at residues 129–149 (VGGLMNATCGNATEMIIAILA). Residues 138–173 (GNATEMIIAILAVGQRKMRIVKLSLLGSILSNLLFV) are cation selection. Residues 150-162 (VGQRKMRIVKLSL) are Extracellular-facing. Residues 163-183 (LGSILSNLLFVLGTSLFLGGI) traverse the membrane as a helical segment. Over 184–196 (SNLRKHQSFDPRQ) the chain is Cytoplasmic. A helical transmembrane segment spans residues 197-217 (GDMNSMLLYLALLCQTLPMIM). Residues 218 to 238 (RFTMEAEEYDGSDVVVLSRAS) are Extracellular-facing. The chain crosses the membrane as a helical span at residues 239–259 (SFVMLIAYLAFLIFHLFSSHL). Residues 260–285 (SPPPPPLPQREDVHDDDVSDKEEEGA) are Cytoplasmic-facing. The chain crosses the membrane as a helical span at residues 286 to 306 (VIGMWSAIFWLIIMTLLVALL). Over 307–319 (SDYLVSTIQDAAD) the chain is Extracellular. The chain crosses the membrane as a helical span at residues 320 to 340 (SWGLSVGFIGIILLPIVGNAA). A cation selection region spans residues 337-372 (GNAAEHAGAVIFAFRNKLDITLGIALGSATQIALFV). Topologically, residues 341-359 (EHAGAVIFAFRNKLDITLG) are cytoplasmic. A helical transmembrane segment spans residues 360 to 380 (IALGSATQIALFVVPVTVLVA). Over 381 to 388 (WTMGIEMD) the chain is Extracellular. Residues 389–409 (LNFNLLETACFALSILVTSLV) form a helical membrane-spanning segment. Topologically, residues 410–416 (LQDGTSN) are cytoplasmic. Residues 417 to 437 (YMKGLVLLLCYVVIAACFFVS) traverse the membrane as a helical segment. Over 438–446 (NSPSSKLLF) the chain is Extracellular.

The protein belongs to the Ca(2+):cation antiporter (CaCA) (TC 2.A.19) family. Cation/proton exchanger (CAX) subfamily. Expressed at low levels in all tissues.

The protein localises to the vacuole membrane. Vacuolar cation/proton exchanger (CAX). Translocates Ca(2+) and other metal ions into vacuoles using the proton gradient formed by H(+)-ATPase and H(+)-pyrophosphatase. Cation selectivity transport in tobacco root tonoplast vesicles is Cd(2+)&gt;Zn(2+)&gt;&gt;Ca(2+)&gt;&gt;&gt;Mn(2+). The polypeptide is Vacuolar cation/proton exchanger 4 (CAX4) (Arabidopsis thaliana (Mouse-ear cress)).